The chain runs to 702 residues: Serotransferrin-A (702 aa).

Positions 1–19 (MDLSLRVALCLSMLALCLA) are cleaved as a signal peptide. Transferrin-like domains lie at 26–340 (VRWC…ALKE) and 353–685 (VRWC…SLNK). Intrachain disulfides connect cysteine 29–cysteine 64 and cysteine 39–cysteine 55. The Fe(3+) site is built by aspartate 79 and tyrosine 111. 3 cysteine pairs are disulfide-bonded: cysteine 134–cysteine 217, cysteine 179–cysteine 192, and cysteine 245–cysteine 259. Positions 136, 140, 142, and 143 each coordinate hydrogencarbonate. Tyrosine 211 is a binding site for Fe(3+). Histidine 267 is a Fe(3+) binding site. Positions 340 to 349 (EGVKEDDSAA) are connecting region. Cystine bridges form between cysteine 356/cysteine 388 and cysteine 366/cysteine 379. Fe(3+) contacts are provided by aspartate 403 and tyrosine 442. 7 disulfide bridges follow: cysteine 413–cysteine 697, cysteine 431–cysteine 658, cysteine 465–cysteine 544, cysteine 489–cysteine 686, cysteine 499–cysteine 513, cysteine 510–cysteine 527, and cysteine 584–cysteine 598. Hydrogencarbonate contacts are provided by threonine 467, arginine 471, alanine 473, and glycine 474. Tyrosine 538 is a binding site for Fe(3+). Histidine 606 lines the Fe(3+) pocket.

It belongs to the transferrin family. In terms of assembly, monomer. As to expression, plasma.

It localises to the secreted. Its function is as follows. Transferrins are iron binding transport proteins which can bind two Fe(3+) ions in association with the binding of an anion, usually bicarbonate. It is responsible for the transport of iron from sites of absorption and heme degradation to those of storage and utilization. Serum transferrin may also have a further role in stimulating cell proliferation. This Xenopus laevis (African clawed frog) protein is Serotransferrin-A (tf-a).